We begin with the raw amino-acid sequence, 126 residues long: MSWQQYVDQHLVATQCVTMAAICGLDGSIWAKSNGLELSQDEVATLARSFSKDEVLAANGIRIGGTKYIYLSGDDKLIRGKKDRQGVHIVKTKTAMVMALYAEPILPEQCAVVVEKLGDWLIQNDL.

It belongs to the profilin family. As to quaternary structure, occurs in many kinds of cells as a complex with monomeric actin in a 1:1 ratio.

The protein localises to the cytoplasm. Its subcellular location is the cytoskeleton. Binds to actin and affects the structure of the cytoskeleton. At high concentrations, profilin prevents the polymerization of actin, whereas it enhances it at low concentrations. By binding to PIP2, it inhibits the formation of IP3 and DG. The protein is Profilin of Branchiostoma belcheri (Amphioxus).